A 335-amino-acid polypeptide reads, in one-letter code: N-acetylmuramoyl-L-alanine amidase sle1 (335 aa).

The signal sequence occupies residues 1 to 25 (MQKKVIAAIIGTSAISAVAATQANA). The 44-residue stretch at 27–70 (TTHTVKPGESVWAISNKYGISIAKLKSLNNLTSNLIFPNQVLKV) folds into the LysM 1 domain. Positions 71–86 (SGSSNSTSNSSRPSTN) are enriched in low complexity. The segment at 71–90 (SGSSNSTSNSSRPSTNSGGG) is disordered. 2 LysM domains span residues 91–134 (SYYT…KLKV) and 158–201 (SYYT…KLKV). Residues 211 to 335 (ASATTTNRGY…YQVNNYRYIH (125 aa)) enclose the Peptidase C51 domain.

The protein localises to the secreted. It is found in the cell surface. The enzyme catalyses Hydrolyzes the link between N-acetylmuramoyl residues and L-amino acid residues in certain cell-wall glycopeptides.. Its function is as follows. Peptidoglycan hydrolase involved in the splitting of the septum during cell division. The protein is N-acetylmuramoyl-L-alanine amidase sle1 (sle1) of Staphylococcus aureus (strain bovine RF122 / ET3-1).